An 85-amino-acid polypeptide reads, in one-letter code: Large ribosomal subunit protein bL27 (85 aa).

Residues 1–20 (MAHKKAGGSSRNGRDSEAKR) are disordered.

The protein belongs to the bacterial ribosomal protein bL27 family.

This Aeromonas salmonicida (strain A449) protein is Large ribosomal subunit protein bL27.